The following is a 510-amino-acid chain: Probable lysine--tRNA ligase, cytoplasmic (510 aa).

This sequence belongs to the class-II aminoacyl-tRNA synthetase family. As to quaternary structure, homodimer.

It is found in the cytoplasm. It carries out the reaction tRNA(Lys) + L-lysine + ATP = L-lysyl-tRNA(Lys) + AMP + diphosphate. The protein is Probable lysine--tRNA ligase, cytoplasmic of Encephalitozoon cuniculi (strain GB-M1) (Microsporidian parasite).